A 128-amino-acid polypeptide reads, in one-letter code: Sulfurtransferase TusD (128 aa).

Catalysis depends on Cys78, which acts as the Cysteine persulfide intermediate.

Belongs to the DsrE/TusD family. Heterohexamer, formed by a dimer of trimers. The hexameric TusBCD complex contains 2 copies each of TusB, TusC and TusD. The TusBCD complex interacts with TusE.

The protein resides in the cytoplasm. In terms of biological role, part of a sulfur-relay system required for 2-thiolation of 5-methylaminomethyl-2-thiouridine (mnm(5)s(2)U) at tRNA wobble positions. Accepts sulfur from TusA and transfers it in turn to TusE. In Buchnera aphidicola subsp. Schizaphis graminum (strain Sg), this protein is Sulfurtransferase TusD.